The sequence spans 510 residues: Scarecrow-like protein 29 (510 aa).

The disordered stretch occupies residues 90–142 (LDLPPEIQQPNDQSRKRSHDGFLEAQQVKKSARSKRKAIKSSEKSSKDGNKEG). Residues 102–111 (QSRKRSHDGF) are compositionally biased toward basic and acidic residues. The span at 119–128 (KSARSKRKAI) shows a compositional bias: basic residues. The segment covering 129–142 (KSSEKSSKDGNKEG) has biased composition (basic and acidic residues). The 375-residue stretch at 136-510 (KDGNKEGRWA…EAVSFCSLWK (375 aa)) folds into the GRAS domain. The leucine repeat I (LRI) stretch occupies residues 143–205 (RWAEKLLNPC…HLSSSSVSSS (63 aa)). The VHIID stretch occupies residues 224-294 (LLKFYEVSPW…GPPPRVRITV (71 aa)). A VHIID motif is present at residues 259–263 (LHIID). The leucine repeat II (LRII) stretch occupies residues 312–337 (NYGSQLLGFARSLKINLQISVLDKLQ). The tract at residues 347–435 (LIVCAQFRLH…RKLMEGEATK (89 aa)) is PFYRE. The segment at 438–510 (MNAGDMNEGK…EAVSFCSLWK (73 aa)) is SAW.

It belongs to the GRAS family. As to expression, expressed in seedlings, roots and flowers.

It localises to the nucleus. Functionally, probable transcription factor involved in plant development. This is Scarecrow-like protein 29 (SCL29) from Arabidopsis thaliana (Mouse-ear cress).